We begin with the raw amino-acid sequence, 660 residues long: Bifunctional polymyxin resistance protein ArnA (660 aa).

Positions 1–304 are formyltransferase ArnAFT; that stretch reads MKTVVFAYHD…TLGLVQGSRL (304 aa). 86 to 88 is a binding site for (6R)-10-formyltetrahydrofolate; it reads HLI. The active-site Proton donor; for formyltransferase activity is the histidine 104. (6R)-10-formyltetrahydrofolate-binding positions include arginine 114 and 136–140; that span reads VKRAD. The dehydrogenase ArnADH stretch occupies residues 314–660; sequence RRTRVLILGV…RTVDLTDKPS (347 aa). Residues aspartate 347 and 368–369 contribute to the NAD(+) site; that span reads DI. UDP-alpha-D-glucuronate contacts are provided by residues alanine 393, tyrosine 398, and 432 to 433; that span reads TS. The active-site Proton acceptor; for decarboxylase activity is glutamate 434. Residues arginine 460, asparagine 492, 526 to 535, and tyrosine 613 contribute to the UDP-alpha-D-glucuronate site; that span reads KLIDGGKQKR. Residue arginine 619 is the Proton donor; for decarboxylase activity of the active site.

This sequence in the N-terminal section; belongs to the Fmt family. UDP-L-Ara4N formyltransferase subfamily. It in the C-terminal section; belongs to the NAD(P)-dependent epimerase/dehydratase family. UDP-glucuronic acid decarboxylase subfamily. In terms of assembly, homohexamer, formed by a dimer of trimers.

The enzyme catalyses UDP-alpha-D-glucuronate + NAD(+) = UDP-beta-L-threo-pentopyranos-4-ulose + CO2 + NADH. It catalyses the reaction UDP-4-amino-4-deoxy-beta-L-arabinose + (6R)-10-formyltetrahydrofolate = UDP-4-deoxy-4-formamido-beta-L-arabinose + (6S)-5,6,7,8-tetrahydrofolate + H(+). It participates in nucleotide-sugar biosynthesis; UDP-4-deoxy-4-formamido-beta-L-arabinose biosynthesis; UDP-4-deoxy-4-formamido-beta-L-arabinose from UDP-alpha-D-glucuronate: step 1/3. The protein operates within nucleotide-sugar biosynthesis; UDP-4-deoxy-4-formamido-beta-L-arabinose biosynthesis; UDP-4-deoxy-4-formamido-beta-L-arabinose from UDP-alpha-D-glucuronate: step 3/3. It functions in the pathway bacterial outer membrane biogenesis; lipopolysaccharide biosynthesis. Functionally, bifunctional enzyme that catalyzes the oxidative decarboxylation of UDP-glucuronic acid (UDP-GlcUA) to UDP-4-keto-arabinose (UDP-Ara4O) and the addition of a formyl group to UDP-4-amino-4-deoxy-L-arabinose (UDP-L-Ara4N) to form UDP-L-4-formamido-arabinose (UDP-L-Ara4FN). The modified arabinose is attached to lipid A and is required for resistance to polymyxin and cationic antimicrobial peptides. This chain is Bifunctional polymyxin resistance protein ArnA, found in Escherichia coli O127:H6 (strain E2348/69 / EPEC).